Consider the following 580-residue polypeptide: Protein O-linked-mannose beta-1,4-N-acetylglucosaminyltransferase 2 (580 aa).

Residues 1–4 (MHLS) lie on the Cytoplasmic side of the membrane. The helical; Signal-anchor for type II membrane protein transmembrane segment at 5–25 (AVLNALLVSVLAAVLWKHVRL) threads the bilayer. Over 26-580 (REHAAALEEE…PFADVLVCNT (555 aa)) the chain is Lumenal. N-linked (GlcNAc...) asparagine glycosylation is found at Asn-99 and Asn-276. Positions 488 to 580 (ARCQASVQGA…PFADVLVCNT (93 aa)) constitute a Fibronectin type-III domain.

The protein belongs to the glycosyltransferase 61 family.

Its subcellular location is the endoplasmic reticulum membrane. The catalysed reaction is 3-O-(alpha-D-mannosyl)-L-threonyl-[protein] + UDP-N-acetyl-alpha-D-glucosamine = 3-O-(N-acetyl-beta-D-glucosaminyl-(1-&gt;4)-alpha-D-mannosyl)-L-threonyl-[protein] + UDP + H(+). Its pathway is protein modification; protein glycosylation. Functionally, O-linked mannose beta-1,4-N-acetylglucosaminyltransferase that transfers UDP-N-acetyl-D-glucosamine to the 4-position of the mannose to generate N-acetyl-D-glucosamine-beta-1,4-O-D-mannosylprotein. Involved in the biosynthesis of the phosphorylated O-mannosyl trisaccharide (N-acetylgalactosamine-beta-3-N-acetylglucosamine-beta-4-(phosphate-6-)mannose), a carbohydrate structure present in alpha-dystroglycan (DAG1), which is required for binding laminin G-like domain-containing extracellular proteins with high affinity. This chain is Protein O-linked-mannose beta-1,4-N-acetylglucosaminyltransferase 2 (POMGNT2), found in Canis lupus familiaris (Dog).